The sequence spans 322 residues: Cell division control protein 10 (322 aa).

Position 1 is an N-acetylmethionine (Met-1). In terms of domain architecture, Septin-type G spans 29-302 (KGFQFNIMVV…EGFRARQLIA (274 aa)). Residues 39–46 (GQSGLGKS) are G1 motif. GTP-binding positions include 39 to 46 (GQSGLGKS), Thr-74, Gly-100, and 180 to 188 (KSDTLTLDE). The tract at residues 97-100 (DTPG) is G3 motif. The tract at residues 179 to 182 (GKSD) is G4 motif. Position 216 is a phosphothreonine (Thr-216). Residues Gly-236 and Arg-251 each coordinate GTP.

The protein belongs to the TRAFAC class TrmE-Era-EngA-EngB-Septin-like GTPase superfamily. Septin GTPase family. Component of the septin complex which consists of CDC3, CDC10, CDC11, CDC12 and probably SHS1 and rearranges to a cortical collar of highly ordered filaments at the mother-bud-neck. A complex formed by CDC3, CDC10, CDC11 and CDC12 is capable of forming long filaments in vitro and the components seem to be present in a 2:2:2:2 arrangement in vivo. The filaments are proposed to be formed by the end-to-end polymerization of CDC3-CDC12-CDC11 complexes with CDC10 serving as a bridge to bundle the polymers into paired filaments. Component of the GIN4 complex composed of at least BNI5, CDC3, CDC10, CDC11, CDC12, GIN4, NAP1 and SHS1. Self-associates. Interacts with SYP1.

The protein resides in the membrane. The protein localises to the bud neck. Functionally, septins are GTPases involved in cytokinesis that assemble early in the cell cycle as a patch at the incipient bud site and form a ring approximate 15 minutes before bud emergence, which transforms into an hour-glass shaped collar of cortical filaments that spans both sides of the mother-bud neck. This collar persists until just before cytokinesis, when it splits into two rings that occupy opposite sides of the neck. The septins at the bud neck serve as a structural scaffold that recruits different components involved in diverse processes at specific stages during the cell cycle. Many proteins bind asymmetrically to the septin collar. The septin assembly is regulated by protein kinases GIN4 and/or CLA4. May act by recruiting MYO1 and HOF1, a protein involved in septation, to the site of cleavage. Septins are also involved in cell morphogenesis, bud site selection, chitin deposition, cell cycle regulation, cell compartmentalization and spore wall formation. This is Cell division control protein 10 (CDC10) from Saccharomyces cerevisiae (strain ATCC 204508 / S288c) (Baker's yeast).